The primary structure comprises 88 residues: Small ribosomal subunit protein uS17 (88 aa).

This sequence belongs to the universal ribosomal protein uS17 family. Part of the 30S ribosomal subunit.

Functionally, one of the primary rRNA binding proteins, it binds specifically to the 5'-end of 16S ribosomal RNA. In Prochlorococcus marinus (strain MIT 9515), this protein is Small ribosomal subunit protein uS17.